The following is a 347-amino-acid chain: Galactoside alpha-(1,2)-fucosyltransferase 2 (347 aa).

At Met1–Gln5 the chain is on the cytoplasmic side. Residues Val6–Ile26 form a helical; Signal-anchor for type II membrane protein membrane-spanning segment. Residues His27 to His347 lie on the Lumenal side of the membrane. Residues Asn192, Asn258, Asn286, and Asn312 are each glycosylated (N-linked (GlcNAc...) asparagine).

This sequence belongs to the glycosyltransferase 11 family. As to expression, expressed in stomach, colon, ovary and uterus, specifically in luminal uterine epithelium. Expressed in various tissues including heart, liver, kidney, testis, epididymis, small intestine,and cecum. Expressed in duodenum, jejunum and ileum.

It is found in the golgi apparatus. It localises to the golgi stack membrane. The catalysed reaction is a beta-D-galactosyl-(1-&gt;3)-N-acetyl-beta-D-glucosaminyl derivative + GDP-beta-L-fucose = an alpha-L-Fuc-(1-&gt;2)-beta-D-Gal-(1-&gt;3)-beta-D-GlcNAc derivative + GDP + H(+). It catalyses the reaction a beta-D-galactosyl-(1-&gt;4)-N-acetyl-beta-D-glucosaminyl derivative + GDP-beta-L-fucose = an alpha-L-Fuc-(1-&gt;2)-beta-D-Gal-(1-&gt;4)-beta-D-GlcNAc derivative + GDP + H(+). It carries out the reaction a neolactoside nLc4Cer + GDP-beta-L-fucose = a neolactoside IV(2)-alpha-Fuc-nLc4Cer + GDP + H(+). The enzyme catalyses a neolactoside nLc4Cer(d18:1(4E)) + GDP-beta-L-fucose = a neolactoside IV(2)-alpha-Fuc-nLc4Cer(d18:1(4E)) + GDP + H(+). The catalysed reaction is a ganglioside GM1 + GDP-beta-L-fucose = a ganglioside Fuc-GM1 + GDP + H(+). It catalyses the reaction a ganglioside GA1 + GDP-beta-L-fucose = a ganglioside Fuc-GA1 + GDP + H(+). It carries out the reaction Lc4Cer + GDP-beta-L-fucose = alpha-L-fucosyl-(1-&gt;2)-beta-D-galactosyl-(1-&gt;3)-N-acetyl-beta-D-glucosaminyl-(1-&gt;3)-beta-D-galactosyl-(1-&gt;4)-beta-D-glucosyl-(1&lt;-&gt;1')-ceramide + GDP + H(+). The enzyme catalyses a beta-D-Gal-(1-&gt;3)-beta-D-GlcNAc-(1-&gt;3)-beta-D-Gal-(1-&gt;4)-beta-D-Glc-(1&lt;-&gt;1')-Cer(d18:1(4E)) + GDP-beta-L-fucose = alpha-L-fucosyl-(1-&gt;2)- beta-D-galactosyl-(1-&gt;3)-N-acetyl-beta-D-glucosaminyl-(1-&gt;3)-beta-D-galactosyl-(1-&gt;4)-beta-D-glucosyl-(1&lt;-&gt;1')-N-acylsphing-4-enine + GDP + H(+). The catalysed reaction is a ganglioside GD1b + GDP-beta-L-fucose = a ganglioside Fuc-GD1b + GDP + H(+). It catalyses the reaction a ganglioside GM1 (d18:1(4E)) + GDP-beta-L-fucose = a ganglioside Fuc-GM1 (d18:1(4E)) + GDP + H(+). It carries out the reaction a globoside GalGb4Cer (d18:1(4E)) + GDP-beta-L-fucose = a globoside Globo-H (d18:1(4E)) + GDP + H(+). The enzyme catalyses a lactoside III(4)-a-Fuc-Lc4Cer + GDP-beta-L-fucose = a lactoside IV(2),III(4)-a-[Fuc]2-Lc4Cer + GDP + H(+). The catalysed reaction is beta-D-galactosyl-(1-&gt;3)-N-acetyl-D-galactosamine + GDP-beta-L-fucose = alpha-L-fucosyl-(1-&gt;2)-beta-D-galactosyl-(1-&gt;3)-N-acetyl-D-galactosamine + GDP + H(+). It participates in protein modification; protein glycosylation. Catalyzes the transfer of L-fucose, from a guanosine diphosphate-beta-L-fucose, to the terminal galactose on both O- and N-linked glycans chains of cell surface glycoproteins and glycolipids and the resulting epitope regulates several processes such as cell-cell interaction including host-microbe interaction, cell surface expression and cell proliferation. Preferentially fucosylates gangliosides GA1 and GM1 in the antrum, cecum and colon and in the female reproductive organs. Fucosylated host glycoproteins or glycolipids mediate interaction with intestinal microbiota influencing its composition. Creates a soluble precursor oligosaccharide FuC-alpha ((1,2)Galbeta-) called the H antigen which is an essential substrate for the final step in the soluble ABO blood group antigen synthesis pathway. The chain is Galactoside alpha-(1,2)-fucosyltransferase 2 from Mus musculus (Mouse).